Reading from the N-terminus, the 360-residue chain is Probable L-asparaginase 3 (360 aa).

A signal peptide spans 1 to 16 (MWSSIISFLFFSVALC). N27, N35, and N40 each carry an N-linked (GlcNAc...) asparagine glycan. One can recognise an Asparaginase/glutaminase domain in the interval 39-359 (PNVTIFAMGG…QNITDIFSLE (321 aa)). Residue T49 is the O-isoaspartyl threonine intermediate of the active site. The N-linked (GlcNAc...) asparagine glycan is linked to N82. S96 is a substrate binding site. N106 is a glycosylation site (N-linked (GlcNAc...) asparagine). Residue 129-130 (TD) coordinates substrate. N-linked (GlcNAc...) asparagine glycosylation is found at N144, N179, N246, N302, and N351.

This sequence belongs to the asparaginase 1 family.

Its subcellular location is the secreted. It is found in the cell wall. It catalyses the reaction L-asparagine + H2O = L-aspartate + NH4(+). The sequence is that of Probable L-asparaginase 3 from Schizosaccharomyces pombe (strain 972 / ATCC 24843) (Fission yeast).